The following is a 115-amino-acid chain: U3-lycotoxin-Ls1e (115 aa).

Residues 1 to 20 (MKFVLLFGVLSLTLFSYSSA) form the signal peptide. The propeptide occupies 21 to 44 (EMLDDFDQADEDELLSLIEKEEAR). Cystine bridges form between C48–C63, C55–C72, C62–C87, and C74–C85.

The protein belongs to the neurotoxin 19 (CSTX) family. 01 subfamily. In terms of tissue distribution, expressed by the venom gland.

Its subcellular location is the secreted. This Lycosa singoriensis (Wolf spider) protein is U3-lycotoxin-Ls1e.